The primary structure comprises 2995 residues: Striated muscle preferentially expressed protein kinase (2995 aa).

The 83-residue stretch at 27 to 109 folds into the Ig-like 1 domain; it reads PPVFLRKLKW…GEARTSAVLA (83 aa). A disulfide bond links C50 and C93. 2 disordered regions span residues 250–272 and 384–467; these read ITGS…KVSQ and LTQT…NSKP. Residues 384–404 show a composition bias toward polar residues; sequence LTQTDKQSSVSTESVPTQVIQ. Low complexity predominate over residues 454–464; the sequence is PPEMNENQENN. Ig-like domains follow at residues 613–701 and 714–802; these read PAES…EELI and PLFT…AELY. The cysteines at positions 639 and 691 are disulfide-linked. Residues 815–834 are disordered; sequence SRLEKMPSIPEEPEVPEGEV. Residues 840–930 form the Ig-like 4 domain; the sequence is PDFIKPLSDL…AACYAHLYVA (91 aa). C861 and C912 are joined by a disulfide. The 99-residue stretch at 937–1035 folds into the Fibronectin type-III 1 domain; that stretch reads PDGPPVIESV…TDLVQLVDRG (99 aa). An Ig-like 5 domain is found at 1135–1224; it reads PPIFETIMED…GSVSCKAELT (90 aa). In terms of domain architecture, Protein kinase 1 spans 1255–1505; that stretch reads YDIHKEIGRG…ATECLLHPWF (251 aa). ATP-binding positions include 1261 to 1269 and K1283; that span reads IGRGAFSYV. D1372 acts as the Proton acceptor in catalysis. 6 disordered regions span residues 1559–1582, 1776–1839, 2017–2058, 2163–2189, 2211–2254, and 2268–2322; these read VPRN…DIDE, RNFR…STGD, LKRL…TGLK, VHSR…VEKQ, SGIS…KMDI, and SKET…KEDF. The span at 1786 to 1795 shows a compositional bias: polar residues; that stretch reads SGDSGTFNND. Low complexity predominate over residues 2274–2284; it reads SSSSAHSIESS. A compositionally biased stretch (basic and acidic residues) spans 2289 to 2299; the sequence is TEIRSRWDRWG. One can recognise an Ig-like 6 domain in the interval 2323–2413; sequence PPVFHIALKD…ASVTTSCILT (91 aa). Residues C2345 and C2397 are joined by a disulfide bond. In terms of domain architecture, Fibronectin type-III 2 spans 2420–2513; that stretch reads CPGTPEIRQI…DGVSIDTKVT (94 aa). Disordered regions lie at residues 2574–2609 and 2648–2676; these read PKMS…YTAP and GEGA…LRQG. Polar residues-rich tracts occupy residues 2587 to 2605 and 2652 to 2674; these read SSVN…SPRS and SSPT…TTLR. The region spanning 2682–2934 is the Protein kinase 2 domain; sequence YSFLDEKARG…IKDCLNHSWL (253 aa). ATP contacts are provided by residues 2688 to 2696 and K2711; that span reads KARGRFGVI. The active-site Proton acceptor is the D2801.

Belongs to the protein kinase superfamily. CAMK Ser/Thr protein kinase family. In terms of processing, may be autophosphorylated. Preferentially expressed in striated muscle.

It localises to the nucleus. It carries out the reaction L-seryl-[protein] + ATP = O-phospho-L-seryl-[protein] + ADP + H(+). The catalysed reaction is L-threonyl-[protein] + ATP = O-phospho-L-threonyl-[protein] + ADP + H(+). The sequence is that of Striated muscle preferentially expressed protein kinase (speg) from Danio rerio (Zebrafish).